The primary structure comprises 242 residues: Small ribosomal subunit protein uS2 (242 aa).

Belongs to the universal ribosomal protein uS2 family.

In Vibrio campbellii (strain ATCC BAA-1116), this protein is Small ribosomal subunit protein uS2.